The sequence spans 128 residues: Small ribosomal subunit protein bS16 (128 aa).

Positions 107 to 128 (AAEAKAAAANESDDSGTDSTES) are disordered. The segment covering 117–128 (ESDDSGTDSTES) has biased composition (acidic residues).

The protein belongs to the bacterial ribosomal protein bS16 family.

The sequence is that of Small ribosomal subunit protein bS16 from Synechococcus sp. (strain CC9311).